A 206-amino-acid polypeptide reads, in one-letter code: Large ribosomal subunit protein bL9 (206 aa).

Residues 182 to 206 are disordered; that stretch reads FAENQQKALAKEMNDNDANSINEEA. Residues 197 to 206 are compositionally biased toward polar residues; sequence NDANSINEEA.

This sequence belongs to the bacterial ribosomal protein bL9 family.

In terms of biological role, binds to the 23S rRNA. The chain is Large ribosomal subunit protein bL9 from Bartonella henselae (strain ATCC 49882 / DSM 28221 / CCUG 30454 / Houston 1) (Rochalimaea henselae).